A 413-amino-acid polypeptide reads, in one-letter code: Intracellular hyaluronan-binding protein 4 (413 aa).

S7 and S36 each carry phosphoserine. A coiled-coil region spans residues 40–64 (DILREAERRRQQQLQRKRRDEAAAA). Positions 42-206 (LREAERRRQQ…RGGPGNRVFD (165 aa)) are disordered. Low complexity predominate over residues 62–82 (AAAAGAGPRGGRSPAGASGHR). An Omega-N-methylarginine modification is found at R70. Residue S74 is modified to Phosphoserine. Residues 87–97 (GRRESQKERKS) are compositionally biased toward basic and acidic residues. A Phosphoserine modification is found at S108. Basic and acidic residues predominate over residues 139-182 (MLERAERRSYREYRPYETERQADFTAEKFPDEKPGDRFDRDRPL). The segment covering 184 to 201 (GRGGPRGGMRGRGRGGPG) has biased composition (gly residues). Glycyl lysine isopeptide (Lys-Gly) (interchain with G-Cter in SUMO1); alternate cross-links involve residues K213 and K276. Glycyl lysine isopeptide (Lys-Gly) (interchain with G-Cter in SUMO2); alternate cross-links involve residues K213 and K276. Residues 227-320 (VRTEDNMGGC…IRKPESTVPS (94 aa)) form a disordered region. Residues 294–315 (DEWKNLQEQTRPKPEFNIRKPE) show a composition bias toward basic and acidic residues. K336 is covalently cross-linked (Glycyl lysine isopeptide (Lys-Gly) (interchain with G-Cter in SUMO1); alternate). A Glycyl lysine isopeptide (Lys-Gly) (interchain with G-Cter in SUMO2); alternate cross-link involves residue K336. Phosphothreonine; by PKC occurs at positions 354 and 375. A disordered region spans residues 360–413 (NFGNLPRPGRGARGGTRGGRGRIRRAENYGPRAEVVMQDVAPNPDDPEDFPALS). Acidic residues predominate over residues 404–413 (DDPEDFPALS).

It belongs to the SERBP1-HABP4 family. Associates with ribosomes; promoting ribosome stabilization. Interacts with EEF2/eEF2; promoting ribosome stabilization. Interacts with FMR1. Interacts with FXR1 and FXR2. Interacts with CHD3 (via C-terminus). Interacts (via C-terminus) with RACK1. Interacts with p53/TP53. Interacts (via N-terminus) with SRSF9; this interaction is direct. Interacts with SYNCRIP; this interaction is direct. Interacts with MEF2C (via N-terminus); this interaction decreases DNA-binding activity of MEF2C in myocardial cells in response to mechanical stress. Interacts with PRMT1 (via N-terminus). Interacts with SPIN1. In terms of processing, methylated. Methylation is decreased by phorbol 12-myristate 13-acetate (PMA)-activated PKC, in vitro. Post-translationally, phosphorylated by phorbol 12-myristate 13-acetate (PMA)-activated PKC isoforms at Thr-354 and Thr-375. As to expression, highly expressed in brain, heart, and kidney, and moderately expressed in skeletal muscle. Also expressed in a variety of tumor cell lines and in activated but not resting leukocytes.

The protein localises to the nucleus. Its subcellular location is the cytoplasm. It is found in the stress granule. The protein resides in the sarcoplasm. It localises to the nuclear body. The protein localises to the nucleolus. Its subcellular location is the nucleus speckle. It is found in the cajal body. The protein resides in the gem. Its function is as follows. Ribosome-binding protein that promotes ribosome hibernation, a process during which ribosomes are stabilized in an inactive state and preserved from proteasomal degradation. Acts via its association with EEF2/eEF2 factor at the A-site of the ribosome, promoting ribosome stabilization in an inactive state compatible with storage. Plays a key role in ribosome hibernation in the mature oocyte by promoting ribosome stabilization. Ribosomes, which are produced in large quantities during oogenesis, are stored and translationally repressed in the oocyte and early embryo. Also binds RNA, regulating transcription and pre-mRNA splicing. Binds (via C-terminus) to poly(U) RNA. Seems to play a role in PML-nuclear bodies formation. Negatively regulates DNA-binding activity of the transcription factor MEF2C in myocardial cells in response to mechanical stress. This is Intracellular hyaluronan-binding protein 4 from Homo sapiens (Human).